The primary structure comprises 279 residues: Glutamate racemase (279 aa).

Residues 13–14 (DS) and 45–46 (YG) contribute to the substrate site. C76 serves as the catalytic Proton donor/acceptor. Residue 77–78 (NT) participates in substrate binding. Catalysis depends on C185, which acts as the Proton donor/acceptor. 186–187 (TH) lines the substrate pocket.

The protein belongs to the aspartate/glutamate racemases family.

It carries out the reaction L-glutamate = D-glutamate. Its pathway is cell wall biogenesis; peptidoglycan biosynthesis. In terms of biological role, provides the (R)-glutamate required for cell wall biosynthesis. The polypeptide is Glutamate racemase (Picosynechococcus sp. (strain ATCC 27264 / PCC 7002 / PR-6) (Agmenellum quadruplicatum)).